Consider the following 559-residue polypeptide: Cytoplasmic polyadenylation element-binding protein 1 (559 aa).

Residues 223–244 (RLDHSSSPLTPPPSATSSGGLS) form a disordered region. 2 consecutive RRM domains span residues 304–401 (CKVF…DAQV) and 423–504 (NTVF…PYLE). Zn(2+) contacts are provided by Cys-508, Cys-511, Cys-520, Cys-525, Cys-530, Cys-533, His-538, and His-546.

It belongs to the RRM CPEB family. Interacts with kinesin, dynein, APLP1, APLP2, TENT2/GLD2 and APP. Both phosphorylated and non phosphorylated forms interact with APLP1. Interacts with TENT4B; the interaction is required for TENT4B-mediated translational control.

It localises to the cytoplasm. Functionally, sequence-specific RNA-binding protein that regulates mRNA cytoplasmic polyadenylation and translation initiation during oocyte maturation and early development. Binds to the cytoplasmic polyadenylation element (CPE), an uridine-rich sequence element (consensus sequence 5'-UUUUUAU-3') within the mRNA 3'-UTR. The polypeptide is Cytoplasmic polyadenylation element-binding protein 1 (cpeb1) (Carassius auratus (Goldfish)).